Here is a 483-residue protein sequence, read N- to C-terminus: Rhamnulokinase (483 aa).

11-15 is an ATP binding site; sequence ASSGR. Residues Gly79 and 234-236 contribute to the substrate site; that span reads HDT. Asp235 functions as the Proton acceptor in the catalytic mechanism. ATP is bound at residue Thr257. A substrate-binding site is contributed by Asn294. ATP is bound at residue Gln302. Residues Cys352 and Cys369 are joined by a disulfide bond. Gly401 is an ATP binding site.

Belongs to the rhamnulokinase family. Mg(2+) serves as cofactor.

It carries out the reaction L-rhamnulose + ATP = L-rhamnulose 1-phosphate + ADP + H(+). The protein operates within carbohydrate degradation; L-rhamnose degradation; glycerone phosphate from L-rhamnose: step 2/3. Its function is as follows. Involved in the catabolism of L-rhamnose (6-deoxy-L-mannose). Catalyzes the transfer of the gamma-phosphate group from ATP to the 1-hydroxyl group of L-rhamnulose to yield L-rhamnulose 1-phosphate. This Listeria monocytogenes serovar 1/2a (strain ATCC BAA-679 / EGD-e) protein is Rhamnulokinase.